The following is a 379-amino-acid chain: Protein-glutamate methylesterase/protein-glutamine glutaminase (379 aa).

Positions 4–121 constitute a Response regulatory domain; that stretch reads KILVVDDSIF…AANRQDAVAL (118 aa). D55 is modified (4-aspartylphosphate). The region spanning 186-379 is the CheB-type methylesterase domain; the sequence is SGKKYRCLAI…FESHILKEMA (194 aa). Residues S198, H225, and D323 contribute to the active site.

Belongs to the CheB family. Phosphorylated by CheA. Phosphorylation of the N-terminal regulatory domain activates the methylesterase activity.

The protein resides in the cytoplasm. The catalysed reaction is [protein]-L-glutamate 5-O-methyl ester + H2O = L-glutamyl-[protein] + methanol + H(+). It catalyses the reaction L-glutaminyl-[protein] + H2O = L-glutamyl-[protein] + NH4(+). In terms of biological role, involved in chemotaxis. Part of a chemotaxis signal transduction system that modulates chemotaxis in response to various stimuli. Catalyzes the demethylation of specific methylglutamate residues introduced into the chemoreceptors (methyl-accepting chemotaxis proteins or MCP) by CheR. Also mediates the irreversible deamidation of specific glutamine residues to glutamic acid. This chain is Protein-glutamate methylesterase/protein-glutamine glutaminase, found in Pseudoalteromonas atlantica (strain T6c / ATCC BAA-1087).